Reading from the N-terminus, the 877-residue chain is Ewing's tumor-associated antigen 1 homolog (877 aa).

Residues 1–82 form a disordered region; the sequence is MQLKDGGTGM…GRSPRGKETP (82 aa). Positions 56–65 are enriched in basic residues; sequence AGTRSARRAQ. Lys87 participates in a covalent cross-link: Glycyl lysine isopeptide (Lys-Gly) (interchain with G-Cter in SUMO2). The ATR-activation domain (AAD) motif lies at 107–113; that stretch reads IFWDQNS. Coiled coils occupy residues 185–213 and 306–335; these read KTKN…IQEQ and AFLN…LLTE. Residues Lys416 and Lys444 each participate in a glycyl lysine isopeptide (Lys-Gly) (interchain with G-Cter in SUMO2) cross-link. The interval 450-479 is disordered; it reads PSKTRNGELRNAGEHRFSSHPGDESRKVPF. The span at 454-476 shows a compositional bias: basic and acidic residues; that stretch reads RNGELRNAGEHRFSSHPGDESRK. Residue Ser467 is modified to Phosphoserine. A Glycyl lysine isopeptide (Lys-Gly) (interchain with G-Cter in SUMO2) cross-link involves residue Lys510. An RBM1 motif motif is present at residues 607–622; sequence GEVDDDLFCQACDDIE. Disordered regions lie at residues 626 to 664 and 818 to 877; these read QQEN…PSKH and ANQQ…ISLP. The segment covering 637-662 has biased composition (low complexity); that stretch reads SVSYTSTRGSRSSSTASKQASQSAPS. Positions 818–833 are enriched in polar residues; the sequence is ANQQQSSINYSESLKP. The span at 840 to 859 shows a compositional bias: basic and acidic residues; sequence ERNRKYSPEEIQRKRQEALV. Positions 843–865 match the RBM2 motif motif; the sequence is RKYSPEEIQRKRQEALVRRKAKA. The span at 868–877 shows a compositional bias: polar residues; sequence TVQSAPISLP.

In terms of assembly, interacts (via RBM1 motif) with RPA1. Interacts (via RBM2 motif) with RPA2. Interacts (via the ATR-activation domain motif) with ATR. Post-translationally, phosphorylated by ATR.

The protein resides in the nucleus. In terms of biological role, replication stress response protein that accumulates at DNA damage sites and promotes replication fork progression and integrity. Recruited to stalled replication forks via interaction with the RPA complex and directly stimulates ATR kinase activity independently of TOPBP1. Probably only regulates a subset of ATR targets. In Mus musculus (Mouse), this protein is Ewing's tumor-associated antigen 1 homolog.